The primary structure comprises 392 residues: 2,3-bisphosphoglycerate-independent phosphoglycerate mutase (392 aa).

This sequence belongs to the BPG-independent phosphoglycerate mutase family. A-PGAM subfamily.

It carries out the reaction (2R)-2-phosphoglycerate = (2R)-3-phosphoglycerate. It functions in the pathway carbohydrate degradation; glycolysis; pyruvate from D-glyceraldehyde 3-phosphate: step 3/5. In terms of biological role, catalyzes the interconversion of 2-phosphoglycerate and 3-phosphoglycerate. The polypeptide is 2,3-bisphosphoglycerate-independent phosphoglycerate mutase (Methanothrix thermoacetophila (strain DSM 6194 / JCM 14653 / NBRC 101360 / PT) (Methanosaeta thermophila)).